Consider the following 214-residue polypeptide: Attacin (214 aa).

An N-terminal signal peptide occupies residues Met-1–His-19. A propeptide spanning residues Val-20–Arg-26 is cleaved from the precursor.

It belongs to the attacin/sarcotoxin-2 family. In terms of tissue distribution, highest expression in fat body and hemocytes and to a much lesser extent in Malpighian tubules, silk gland and midgut.

The protein resides in the secreted. Hemolymph antibacterial protein. Has a wide spectrum of activity against both Gram-positive and Gram-negative bacteria. This chain is Attacin, found in Bombyx mori (Silk moth).